Consider the following 207-residue polypeptide: Dephospho-CoA kinase (207 aa).

The DPCK domain occupies 4–203 (VIGLTGGIAS…EEGYIEKPNY (200 aa)). 12-17 (ASGKST) provides a ligand contact to ATP.

It belongs to the CoaE family.

It is found in the cytoplasm. The enzyme catalyses 3'-dephospho-CoA + ATP = ADP + CoA + H(+). The protein operates within cofactor biosynthesis; coenzyme A biosynthesis; CoA from (R)-pantothenate: step 5/5. Functionally, catalyzes the phosphorylation of the 3'-hydroxyl group of dephosphocoenzyme A to form coenzyme A. In Staphylococcus aureus (strain USA300), this protein is Dephospho-CoA kinase.